We begin with the raw amino-acid sequence, 151 residues long: MKKIDVKILDPRVGKEFPLPTYATSGSAGLDLRACLDDAVELAPGDSTLVPTGLAIHIADPSLAAMMLPRSGLGHKHGIVLGNLVGLIDSDYQGQLMISVWNRGQDSFTIQPGERIAQMIFVPVVQAEFNLVEDFDATDRGEGGFGHSGRQ.

Substrate is bound by residues 70–72, N83, 87–89, and M97; these read RSG and LID.

It belongs to the dUTPase family. The cofactor is Mg(2+).

It carries out the reaction dUTP + H2O = dUMP + diphosphate + H(+). Its pathway is pyrimidine metabolism; dUMP biosynthesis; dUMP from dCTP (dUTP route): step 2/2. This enzyme is involved in nucleotide metabolism: it produces dUMP, the immediate precursor of thymidine nucleotides and it decreases the intracellular concentration of dUTP so that uracil cannot be incorporated into DNA. The protein is Deoxyuridine 5'-triphosphate nucleotidohydrolase of Shigella sonnei (strain Ss046).